A 361-amino-acid chain; its full sequence is Phospho-N-acetylmuramoyl-pentapeptide-transferase (361 aa).

Helical transmembrane passes span 25 to 45, 71 to 91, 94 to 114, 133 to 153, 169 to 189, 200 to 220, 240 to 260, 264 to 284, 289 to 309, and 338 to 358; these read TGGA…WIID, TPTM…VLWA, LNPY…VGFY, WRLL…VRLG, VAIN…VGAG, GLAI…SYLA, LSVL…FNAP, IFMG…IAVA, IVLA…IVQV, and QIVI…LSTL.

The protein belongs to the glycosyltransferase 4 family. MraY subfamily. It depends on Mg(2+) as a cofactor.

The protein resides in the cell inner membrane. It catalyses the reaction UDP-N-acetyl-alpha-D-muramoyl-L-alanyl-gamma-D-glutamyl-meso-2,6-diaminopimeloyl-D-alanyl-D-alanine + di-trans,octa-cis-undecaprenyl phosphate = di-trans,octa-cis-undecaprenyl diphospho-N-acetyl-alpha-D-muramoyl-L-alanyl-D-glutamyl-meso-2,6-diaminopimeloyl-D-alanyl-D-alanine + UMP. Its pathway is cell wall biogenesis; peptidoglycan biosynthesis. Its function is as follows. Catalyzes the initial step of the lipid cycle reactions in the biosynthesis of the cell wall peptidoglycan: transfers peptidoglycan precursor phospho-MurNAc-pentapeptide from UDP-MurNAc-pentapeptide onto the lipid carrier undecaprenyl phosphate, yielding undecaprenyl-pyrophosphoryl-MurNAc-pentapeptide, known as lipid I. The sequence is that of Phospho-N-acetylmuramoyl-pentapeptide-transferase from Rhodopseudomonas palustris (strain BisB18).